The sequence spans 105 residues: Protein Rev (105 aa).

The residue at position 5 (S5) is a Phosphoserine; by host CK2. The tract at residues 18–26 (IIKILYQSN) is homomultimerization. The segment covering 24–35 (QSNPYPDSSQGT) has biased composition (polar residues). 2 disordered regions span residues 24 to 49 (QSNP…WRAR) and 65 to 105 (LGGP…ATTE). The Nuclear localization signal and RNA-binding (RRE) motif lies at 35 to 51 (TRQARRNRRRRWRARQR). The segment covering 37–49 (QARRNRRRRWRAR) has biased composition (basic residues). The short motif at 74–85 (LPLPPLGRLTLD) is the Nuclear export signal and binding to XPO1 element. The segment covering 95 to 105 (TESQQGTATTE) has biased composition (polar residues).

This sequence belongs to the HIV-1 REV protein family. In terms of assembly, homomultimer; when bound to the RRE. Multimeric assembly is essential for activity and may involve XPO1. Binds to human KPNB1, XPO1, TNPO1, RANBP5 and IPO7. Interacts with the viral Integrase. Interacts with human KHDRBS1. Interacts with human NAP1; this interaction decreases Rev multimerization and stimulates its activity. Interacts with human DEAD-box helicases DDX3 and DDX24; these interactions may serve for viral RNA export to the cytoplasm and packaging, respectively. Interacts with human PSIP1; this interaction may inhibit HIV-1 DNA integration by promoting dissociation of the Integrase-LEDGF/p75 complex. Asymmetrically arginine dimethylated at one site by host PRMT6. Methylation impairs the RNA-binding activity and export of viral RNA from the nucleus to the cytoplasm. Post-translationally, phosphorylated by protein kinase CK2. Presence of, and maybe binding to the N-terminus of the regulatory beta subunit of CK2 is necessary for CK2-mediated Rev's phosphorylation.

The protein resides in the host nucleus. Its subcellular location is the host nucleolus. It is found in the host cytoplasm. Its function is as follows. Escorts unspliced or incompletely spliced viral pre-mRNAs (late transcripts) out of the nucleus of infected cells. These pre-mRNAs carry a recognition sequence called Rev responsive element (RRE) located in the env gene, that is not present in fully spliced viral mRNAs (early transcripts). This function is essential since most viral proteins are translated from unspliced or partially spliced pre-mRNAs which cannot exit the nucleus by the pathway used by fully processed cellular mRNAs. Rev itself is translated from a fully spliced mRNA that readily exits the nucleus. Rev's nuclear localization signal (NLS) binds directly to KPNB1/Importin beta-1 without previous binding to KPNA1/Importin alpha-1. KPNB1 binds to the GDP bound form of RAN (Ran-GDP) and targets Rev to the nucleus. In the nucleus, the conversion from Ran-GDP to Ran-GTP dissociates Rev from KPNB1 and allows Rev's binding to the RRE in viral pre-mRNAs. Rev multimerization on the RRE via cooperative assembly exposes its nuclear export signal (NES) to the surface. Rev can then form a complex with XPO1/CRM1 and Ran-GTP, leading to nuclear export of the complex. Conversion from Ran-GTP to Ran-GDP mediates dissociation of the Rev/RRE/XPO1/RAN complex, so that Rev can return to the nucleus for a subsequent round of export. Beside KPNB1, also seems to interact with TNPO1/Transportin-1, RANBP5/IPO5 and IPO7/RANBP7 for nuclear import. The nucleoporin-like HRB/RIP is an essential cofactor that probably indirectly interacts with Rev to release HIV RNAs from the perinuclear region to the cytoplasm. The sequence is that of Protein Rev from Homo sapiens (Human).